Consider the following 78-residue polypeptide: Bowman-Birk type proteinase inhibitors I-A, I-B, and I-A' (78 aa).

Disulfide bonds link Cys-18-Cys-72, Cys-19-Cys-34, Cys-22-Cys-68, Cys-24-Cys-32, Cys-42-Cys-49, Cys-46-Cys-61, and Cys-51-Cys-59.

The protein belongs to the Bowman-Birk serine protease inhibitor family.

Functionally, these inhibitors strongly inhibit trypsin. The polypeptide is Bowman-Birk type proteinase inhibitors I-A, I-B, and I-A' (Phaseolus angularis (Azuki bean)).